The sequence spans 48 residues: Sperm protamine P1 (48 aa).

It belongs to the protamine P1 family. As to expression, testis.

It localises to the nucleus. Its subcellular location is the chromosome. Functionally, protamines substitute for histones in the chromatin of sperm during the haploid phase of spermatogenesis. They compact sperm DNA into a highly condensed, stable and inactive complex. The sequence is that of Sperm protamine P1 (PRM1) from Eptesicus fuscus (Big brown bat).